Reading from the N-terminus, the 298-residue chain is Probable endonuclease 4 (298 aa).

9 residues coordinate Zn(2+): H69, H111, E146, D180, H183, H215, D228, H230, and E260.

It belongs to the AP endonuclease 2 family. Zn(2+) serves as cofactor.

The enzyme catalyses Endonucleolytic cleavage to 5'-phosphooligonucleotide end-products.. Endonuclease IV plays a role in DNA repair. It cleaves phosphodiester bonds at apurinic or apyrimidinic (AP) sites, generating a 3'-hydroxyl group and a 5'-terminal sugar phosphate. In Bacillus cereus (strain G9842), this protein is Probable endonuclease 4.